Here is a 668-residue protein sequence, read N- to C-terminus: Patellin-5 (668 aa).

The tract at residues 1–263 (MSQDSATTTP…STTTSTVASR (263 aa)) is disordered. Basic and acidic residues-rich tracts occupy residues 55–68 (ESNH…EKVT), 82–100 (AAED…ETAK), 107–125 (TAED…ETVK), and 132–150 (VAED…ETVK). A compositionally biased stretch (polar residues) spans 170 to 186 (TPETETSEADTSLLVTS). Acidic residues predominate over residues 218–231 (VEDWTEPELPDEAV). Over residues 244 to 254 (PEPQTPPPPPS) the composition is skewed to pro residues. Serine 290 carries the post-translational modification Phosphoserine. A CRAL-TRIO domain is found at 377–552 (DENLGDDLDK…QYGGLSVDNC (176 aa)). The GOLD domain maps to 556–662 (SDFTHDDIAT…KKMLIYRFKV (107 aa)).

It belongs to the patellin family.

The protein localises to the membrane. The protein resides in the cytoplasm. Functionally, carrier protein that may be involved in membrane-trafficking events associated with cell plate formation during cytokinesis. Binds to some hydrophobic molecules such as phosphoinositides and promotes their transfer between the different cellular sites. The protein is Patellin-5 (PATL5) of Arabidopsis thaliana (Mouse-ear cress).